A 95-amino-acid polypeptide reads, in one-letter code: Endoribonuclease VapD homolog (95 aa).

The protein belongs to the VapD ribonuclease family. As to quaternary structure, homodimer.

In terms of biological role, cleaves ssRNA, mostly between U:A. This Helicobacter pylori (strain ATCC 700392 / 26695) (Campylobacter pylori) protein is Endoribonuclease VapD homolog.